The chain runs to 473 residues: Glutamyl-tRNA reductase (473 aa).

Residues 49-52 (TCNR), Ser-109, 114-116 (ESQ), and Gln-120 each bind substrate. Catalysis depends on Cys-50, which acts as the Nucleophile. Residues 196 to 215 (LDGGGVAAEGPRHAVTPEPP) form a disordered region. 226-231 (GAGAVG) provides a ligand contact to NADP(+).

Belongs to the glutamyl-tRNA reductase family. In terms of assembly, homodimer.

It catalyses the reaction (S)-4-amino-5-oxopentanoate + tRNA(Glu) + NADP(+) = L-glutamyl-tRNA(Glu) + NADPH + H(+). It functions in the pathway porphyrin-containing compound metabolism; protoporphyrin-IX biosynthesis; 5-aminolevulinate from L-glutamyl-tRNA(Glu): step 1/2. Catalyzes the NADPH-dependent reduction of glutamyl-tRNA(Glu) to glutamate 1-semialdehyde (GSA). The chain is Glutamyl-tRNA reductase from Frankia casuarinae (strain DSM 45818 / CECT 9043 / HFP020203 / CcI3).